Reading from the N-terminus, the 2382-residue chain is Serine/threonine-protein kinase WNK1 (2382 aa).

2 disordered regions span residues 1–81 (MSGG…RFFR) and 95–203 (LPGL…QQDD). Phosphoserine is present on residues serine 15 and serine 19. The segment covering 50-66 (RTEEYRRRRHTMDKDSR) has biased composition (basic and acidic residues). At threonine 60 the chain carries Phosphothreonine. Composition is skewed to low complexity over residues 95 to 108 (LPGL…PSIP) and 125 to 153 (VTAT…GPAP). Phosphoserine is present on residues serine 167 and serine 174. A Protein kinase domain is found at 221 to 479 (LKFDIEIGRG…IKDLLNHAFF (259 aa)). Position 231 (serine 231) interacts with ATP. Positions 283 and 299 each coordinate chloride. ATP contacts are provided by residues 301–304 (TELM) and lysine 351. The active-site Proton acceptor is aspartate 368. Chloride is bound by residues leucine 369 and leucine 371. Residues serine 378 and serine 382 each carry the phosphoserine; by autocatalysis modification. The segment at 488 to 555 (ELAEEDDGEK…VCEGDHKTMA (68 aa)) is autoinhibitory domain. Residues 573–588 (QLVREEQEKKKQEESS) are compositionally biased toward basic and acidic residues. Disordered stretches follow at residues 573 to 779 (QLVR…QPQA), 1018 to 1041 (QPGG…STQG), and 1053 to 1119 (VAQT…SRPK). The segment covering 598–614 (ASQTGIKQLPSASTGIP) has biased composition (polar residues). Positions 615–625 (TASTTSASVST) are enriched in low complexity. The tract at residues 628–638 (EPEEPEADQHQ) is interaction with KLHL3. Positions 637–689 (HQQLQYQQPSISVLSDGTVDSGQGSSVFTESRVSSQQTVSYGSQHEQAHSTGT) are enriched in polar residues. The span at 709-779 (PPSSVAQGQS…TAQPVSQPQA (71 aa)) shows a compositional bias: low complexity. Polar residues predominate over residues 1025-1041 (QAPTTSSQQAVLESTQG). The segment covering 1053–1077 (VAQTQATQPTTLASSVDSAHSDVAS) has biased composition (low complexity). Residues 1080 to 1090 (SDGNENVPSSS) are compositionally biased toward polar residues. The span at 1098 to 1119 (TKRHYRKSVRSRSRHEKTSRPK) shows a compositional bias: basic residues. The RFXV motif 1 motif lies at 1257-1260 (RFIV). A Phosphoserine modification is found at serine 1261. Low complexity-rich tracts occupy residues 1457-1467 (SASAGGSTATP) and 1733-1745 (QVST…TSGV). Disordered stretches follow at residues 1457–1476 (SASA…AVVS) and 1733–1790 (QVST…TQSQ). Threonine 1848 is modified (phosphothreonine). The RFXV motif 2 signature appears at 1859 to 1862 (RFQV). The interval 1866–1948 (ADGAQKEGKN…QPTKVGRFQV (83 aa)) is disordered. Positions 1869 to 1884 (AQKEGKNKSEDAKSVH) are enriched in basic and acidic residues. The span at 1887–1905 (SSTSESSVLSSSSPESTLV) shows a compositional bias: low complexity. A compositionally biased stretch (polar residues) spans 1927-1940 (KTTASEAKSDTGQP). 2 short sequence motifs (RFXV motif) span residues 1945–1948 (RFQV) and 1957–1960 (RFSV). A phosphoserine mark is found at serine 1978, serine 2002, serine 2011, serine 2012, serine 2027, serine 2029, and serine 2032. Basic and acidic residues predominate over residues 1994–2003 (PKKEKPELSE). 2 disordered regions span residues 1994 to 2069 (PKKE…DIED) and 2101 to 2196 (LYTK…NLYS). Residues 2035 to 2062 (QLSSKSLPSQNLSQSLSNSFNSSYMSSD) show a composition bias toward low complexity. Serine 2121 carries the phosphoserine modification. Basic residues predominate over residues 2122 to 2134 (GRRRRPTKSKGSK). Residues 2135–2145 (SSRSSSLGNKS) are compositionally biased toward low complexity. Polar residues-rich tracts occupy residues 2146–2167 (PQLS…QQTL) and 2175–2196 (ESGQ…NLYS). The tract at residues 2241-2261 (SRKGTFTDDLHKLVDNWARDA) is amphipathic alpha-helix. Phosphoserine is present on residues serine 2270 and serine 2286. The interval 2332–2352 (PFGAQWSGTGGPAPQPLGQFQ) is disordered. Phosphoserine is present on residues serine 2370 and serine 2372.

This sequence belongs to the protein kinase superfamily. Ser/Thr protein kinase family. WNK subfamily. In terms of assembly, interacts with WNK3. Interacts with WNK4; inhibiting the activity of WNK4. Interacts with SGK1; promoting its activation. Associates with the mTORC2 complex. Interacts with UVRAG. Interacts (via amphipathic alpha-helix region) with EMC2; promoting the ER membrane protein complex assembly. Interacts with isoform 1; inhibiting isoform 1 activity. Requires Mg(2+) as cofactor. Autophosphorylated at Ser-378 and Ser-382, promoting its activity. Autophosphorylation at Ser-382 is inhibited by intracellular calcium. Phosphorylation at Thr-60 increases ability to activate SGK1. Post-translationally, ubiquitinated by the BCR(KLHL3) complex, leading to its degradation. Also ubiquitinated by the BCR(KLHL2) complex. In terms of processing, may be O-glycosylated. Widely expressed, with highest levels observed in the testis, heart, kidney and skeletal muscle. In terms of tissue distribution, strong expression in dorsal root ganglia and spinal cord. As to expression, this isoform is kidney-specific and specifically expressed in the distal convoluted tubule (DCT) and connecting tubule (CNT) of the nephron.

The protein resides in the cytoplasm. Its subcellular location is the nucleus. It localises to the cytoskeleton. It is found in the spindle. It catalyses the reaction L-seryl-[protein] + ATP = O-phospho-L-seryl-[protein] + ADP + H(+). It carries out the reaction L-threonyl-[protein] + ATP = O-phospho-L-threonyl-[protein] + ADP + H(+). Activated in response to hyperosmotic stress: cell shrinkage promotes formation of a membraneless compartment that concentrates WNK1 with its substrates, OXSR1/OSR1 and STK39/SPAK. Activation requires autophosphorylation of Ser-382 and, to a lower extent, Ser-378. Autophosphorylation and subsequent activation is inhibited by increases in intracellular ionic strength: Cl(-) potently inhibits WNK1 kinase activity via direct binding. Also inhibited by K(+) ions. Inhibited by small compounds staurosporine, tyrphostin 47, as well as Src tyrosine kinase inhibitors PP1 and PP2. Functionally, serine/threonine-protein kinase component of the WNK1-SPAK/OSR1 kinase cascade, which acts as a key regulator of blood pressure and regulatory volume increase by promoting ion influx. WNK1 mediates regulatory volume increase in response to hyperosmotic stress by acting as a molecular crowding sensor, which senses cell shrinkage and mediates formation of a membraneless compartment by undergoing liquid-liquid phase separation. The membraneless compartment concentrates WNK1 with its substrates, OXSR1/OSR1 and STK39/SPAK, promoting WNK1-dependent phosphorylation and activation of downstream kinases OXSR1/OSR1 and STK39/SPAK. Following activation, OXSR1/OSR1 and STK39/SPAK catalyze phosphorylation of ion cotransporters SLC12A1/NKCC2, SLC12A2/NKCC1, SLC12A5/KCC2 and SLC12A6/KCC3, regulating their activity. Phosphorylation of Na-K-Cl cotransporters SLC12A2/NKCC1 and SLC12A2/NKCC1 promote their activation and ion influx; simultaneously, phosphorylation of K-Cl cotransporters SLC12A5/KCC2 and SLC12A6/KCC3 inhibit their activity, blocking ion efflux. Also acts as a regulator of angiogenesis in endothelial cells via activation of OXSR1/OSR1 and STK39/SPAK: activation of OXSR1/OSR1 regulates chemotaxis and invasion, while STK39/SPAK regulates endothelial cell proliferation. Also acts independently of the WNK1-SPAK/OSR1 kinase cascade by catalyzing phosphorylation of other substrates, such as SYT2, PCF11 and NEDD4L. Mediates phosphorylation of SYT2, regulating SYT2 association with phospholipids and membrane-binding. Regulates mRNA export in the nucleus by mediating phosphorylation of PCF11, thereby decreasing the association between PCF11 and POLR2A/RNA polymerase II and promoting mRNA export to the cytoplasm. Acts as a negative regulator of autophagy. Required for the abscission step during mitosis, independently of the WNK1-SPAK/OSR1 kinase cascade. May also play a role in actin cytoskeletal reorganization. Also acts as a scaffold protein independently of its protein kinase activity: negatively regulates cell membrane localization of various transporters and channels, such as SLC4A4, SLC26A6, SLC26A9, TRPV4 and CFTR. Involved in the regulation of epithelial Na(+) channel (ENaC) by promoting activation of SGK1 in a kinase-independent manner: probably acts as a scaffold protein that promotes the recruitment of SGK1 to the mTORC2 complex in response to chloride, leading to mTORC2-dependent phosphorylation and activation of SGK1. Acts as an assembly factor for the ER membrane protein complex independently of its protein kinase activity: associates with EMC2 in the cytoplasm via its amphipathic alpha-helix, and prevents EMC2 ubiquitination and subsequent degradation, thereby promoting EMC2 stabilization. Its function is as follows. Kinase-defective isoform specifically expressed in kidney, which acts as a dominant-negative regulator of the longer isoform 1. Does not directly inhibit WNK4 and has no direct effect on sodium and chloride ion transport. Down-regulates sodium-chloride cotransporter activity indirectly by inhibiting isoform 1, it associates with isoform 1 and attenuates its kinase activity. In kidney, may play an important role regulating sodium and potassium balance. This Homo sapiens (Human) protein is Serine/threonine-protein kinase WNK1.